A 277-amino-acid polypeptide reads, in one-letter code: PHD finger protein ALFIN-LIKE 9 (277 aa).

2 disordered regions span residues 138–206 and 255–277; these read KSKA…EEEH and PSCS…ARPS. Residues 145 to 160 show a composition bias toward low complexity; it reads SANNHSNSKSKSSNKT. The PHD-type zinc finger occupies 208–260; sequence ETLCGACGESYGADEFWICCDICEKWFHGKCVKITPAKAEHIKQYKCPSCSGG. Residues 259 to 270 are compositionally biased toward gly residues; the sequence is GGNGGGGGGSGN.

This sequence belongs to the Alfin family. As to quaternary structure, interacts with H3K4me3 and to a lesser extent with H3K4me2.

The protein resides in the nucleus. In terms of biological role, histone-binding component that specifically recognizes H3 tails trimethylated on 'Lys-4' (H3K4me3), which mark transcription start sites of virtually all active genes. The polypeptide is PHD finger protein ALFIN-LIKE 9 (Oryza sativa subsp. indica (Rice)).